The sequence spans 99 residues: Small ribosomal subunit protein uS17 (99 aa).

This sequence belongs to the universal ribosomal protein uS17 family. As to quaternary structure, part of the 30S ribosomal subunit.

Functionally, one of the primary rRNA binding proteins, it binds specifically to the 5'-end of 16S ribosomal RNA. The protein is Small ribosomal subunit protein uS17 of Thermosipho africanus (strain TCF52B).